We begin with the raw amino-acid sequence, 152 residues long: Acidic phospholipase A2 homolog textilotoxin D chain (152 aa).

The first 19 residues, 1-19, serve as a signal peptide directing secretion; it reads MHPAHLLVLLGVCVSLLGA. 7 disulfides stabilise this stretch: Cys-38–Cys-104, Cys-54–Cys-151, Cys-56–Cys-72, Cys-71–Cys-132, Cys-78–Cys-125, Cys-88–Cys-118, and Cys-111–Cys-123. N-linked (GlcNAc...) asparagine glycosylation is present at Asn-112.

This sequence belongs to the phospholipase A2 family. Group I subfamily. D49 sub-subfamily. As to quaternary structure, heterohexamer. 2 forms exist: 2 A or 2 B chains, 2 C chains and 2 covalently-linked D chains, and 1 A or 1 B, 1 C, 2 covalently-linked D chains and 2 differentially glycosylated covalently-linked D chains. Textilotoxin was originally described as pentameric. As to expression, expressed by the venom gland.

The protein resides in the secreted. Its function is as follows. Snake venom oligomeric phospholipase A2 that has potent presynaptic neurotoxicity. Chain D is not itself neurotoxic, but it is essential for the neurotoxicity of textilotoxin. Chain D possesses a very low phospholipase activity. The polypeptide is Acidic phospholipase A2 homolog textilotoxin D chain (Pseudonaja textilis (Eastern brown snake)).